The sequence spans 672 residues: NADPH-Fe(3+) oxidoreductase subunit beta (672 aa).

[4Fe-4S] cluster is bound by residues cysteine 203, cysteine 207, cysteine 211, and cysteine 215. 254–283 (KKVAIVGAGPAGLACAYYLALEGYPCTIYE) provides a ligand contact to FAD. 388 to 421 (GKKVVVVGGGNTAIDCVRVALREGAEESTLLYRR) lines the NADP(+) pocket. An FAD-binding site is contributed by 552–562 (TDLEGVFAGGD).

Heterotetramer with 2 alpha subunits. The cofactor is [4Fe-4S] cluster. Requires FAD as cofactor.

It is found in the cell membrane. In terms of biological role, probably involved in acetate metabolism and not in the reduction of Fe(3+) chelates. May serve as a major route for NADP regeneration. The protein is NADPH-Fe(3+) oxidoreductase subunit beta (sfrB) of Geobacter sulfurreducens (strain DL-1 / KN400).